We begin with the raw amino-acid sequence, 232 residues long: Ion-translocating oxidoreductase complex subunit E (232 aa).

5 helical membrane passes run 39 to 59, 69 to 89, 93 to 113, 128 to 148, and 182 to 202; these read LGLG…ISLV, IPVF…LVNA, GLYM…IIIG, AFDG…LGAT, and SFLL…LIAL.

It belongs to the NqrDE/RnfAE family. The complex is composed of six subunits: RnfA, RnfB, RnfC, RnfD, RnfE and RnfG.

Its subcellular location is the cell inner membrane. In terms of biological role, part of a membrane-bound complex that couples electron transfer with translocation of ions across the membrane. The protein is Ion-translocating oxidoreductase complex subunit E of Shewanella oneidensis (strain ATCC 700550 / JCM 31522 / CIP 106686 / LMG 19005 / NCIMB 14063 / MR-1).